The sequence spans 907 residues: Translation initiation factor IF-2 (907 aa).

Composition is skewed to basic and acidic residues over residues 223–235 (LAQRRQEEAKRAA), 251–263 (VAKEAPKPEEKNA), and 270–281 (GGKDWNDSDGKK). The disordered stretch occupies residues 223–320 (LAQRRQEEAK…ENQQHAFTAP (98 aa)). Residues 407 to 576 (PRPPVVTVMG…LLQAEVLELK (170 aa)) form the tr-type G domain. Residues 416–423 (GHVDHGKT) form a G1 region. 416–423 (GHVDHGKT) is a GTP binding site. A G2 region spans residues 441–445 (GITQH). Positions 462 to 465 (DTPG) are G3. Residues 462 to 466 (DTPGH) and 516 to 519 (NKID) each bind GTP. The G4 stretch occupies residues 516-519 (NKID). The G5 stretch occupies residues 552-554 (SAK).

This sequence belongs to the TRAFAC class translation factor GTPase superfamily. Classic translation factor GTPase family. IF-2 subfamily.

It is found in the cytoplasm. Its function is as follows. One of the essential components for the initiation of protein synthesis. Protects formylmethionyl-tRNA from spontaneous hydrolysis and promotes its binding to the 30S ribosomal subunits. Also involved in the hydrolysis of GTP during the formation of the 70S ribosomal complex. The polypeptide is Translation initiation factor IF-2 (Methylobacillus flagellatus (strain ATCC 51484 / DSM 6875 / VKM B-1610 / KT)).